The chain runs to 211 residues: Large ribosomal subunit protein uL4 (211 aa).

Positions 41 to 53 are enriched in polar residues; it reads QAHSRQGTASTLT. The disordered stretch occupies residues 41–78; that stretch reads QAHSRQGTASTLTRAEVRGGGRKPYKQKGTGRARQGTI. Basic residues predominate over residues 60–71; the sequence is GGRKPYKQKGTG.

It belongs to the universal ribosomal protein uL4 family. As to quaternary structure, part of the 50S ribosomal subunit.

One of the primary rRNA binding proteins, this protein initially binds near the 5'-end of the 23S rRNA. It is important during the early stages of 50S assembly. It makes multiple contacts with different domains of the 23S rRNA in the assembled 50S subunit and ribosome. Functionally, forms part of the polypeptide exit tunnel. The protein is Large ribosomal subunit protein uL4 of Prochlorococcus marinus (strain MIT 9303).